A 263-amino-acid chain; its full sequence is uncharacterized protein (263 aa).

The Response regulatory domain occupies 6-121; that stretch reads TAIIADDEPL…RLQTTCERVK (116 aa). At D58 the chain carries 4-aspartylphosphate. Residues 158–263 form the HTH LytTR-type domain; sequence IKATQGDDIH…RASQSLFKGM (106 aa).

This is an uncharacterized protein from Vibrio parahaemolyticus serotype O3:K6 (strain RIMD 2210633).